The sequence spans 182 residues: Prorelaxin (182 aa).

The first 25 residues, 1–25, serve as a signal peptide directing secretion; the sequence is MRRLFLSHVLGAWLLLSQLPRELSG. Q26 is modified (pyrrolidone carboxylic acid). 3 disulfides stabilise this stretch: C35–C169, C47–C182, and C168–C173. A propeptide spans 54–156 (connecting peptide); sequence KTVLRLEEPG…LKNLGLDKHS (103 aa). Positions 161 to 162 are excised as a propeptide; the sequence is MI. Q163 carries the post-translational modification Pyrrolidone carboxylic acid.

The protein belongs to the insulin family. As to quaternary structure, heterodimer of a B chain and an A chain linked by two disulfide bonds.

Its subcellular location is the secreted. In terms of biological role, relaxin is an ovarian hormone that acts with estrogen to produce dilatation of the birth canal in many mammals. This is Prorelaxin (RLN) from Equus caballus (Horse).